Consider the following 1039-residue polypeptide: FHIP family protein GG24907 (1039 aa).

2 positions are modified to phosphoserine: S498 and S805. Disordered regions lie at residues A831–S877, G904–S945, and S957–A984. 2 stretches are compositionally biased toward polar residues: residues T855–S877 and G904–Q924. Residues A925 to S945 show a composition bias toward low complexity. Over residues S957–T966 the composition is skewed to polar residues.

Belongs to the FHIP family.

The sequence is that of FHIP family protein GG24907 from Drosophila erecta (Fruit fly).